Here is a 119-residue protein sequence, read N- to C-terminus: Large ribosomal subunit protein bL20 (119 aa).

The protein belongs to the bacterial ribosomal protein bL20 family.

In terms of biological role, binds directly to 23S ribosomal RNA and is necessary for the in vitro assembly process of the 50S ribosomal subunit. It is not involved in the protein synthesizing functions of that subunit. The protein is Large ribosomal subunit protein bL20 of Rhodopseudomonas palustris (strain BisA53).